A 101-amino-acid chain; its full sequence is Small ribosomal subunit protein uS14 (101 aa).

It belongs to the universal ribosomal protein uS14 family. As to quaternary structure, part of the 30S ribosomal subunit. Contacts proteins S3 and S10.

In terms of biological role, binds 16S rRNA, required for the assembly of 30S particles and may also be responsible for determining the conformation of the 16S rRNA at the A site. This is Small ribosomal subunit protein uS14 from Sodalis glossinidius (strain morsitans).